Here is a 762-residue protein sequence, read N- to C-terminus: cGMP-dependent protein kinase 2 (762 aa).

The interval 1-26 (MGNGSVKPKHAKHPDGHSGNLSNEAL) is disordered. Residue Gly-2 is the site of N-myristoyl glycine attachment. A phosphoserine mark is found at Ser-110 and Ser-117. Residues 118–138 (RRGAKAGVSAEPTTRTYDLNK) are disordered. Positions 168–283 (FLKRLDPQQI…DEEYRNFLRS (116 aa)) are cGMP-binding, high affinity; cAMP-binding, moderate affinity. 3',5'-cyclic GMP is bound by residues 232 to 235 (GELA), 242 to 243 (RT), Lys-347, 356 to 359 (GEKA), 366 to 367 (RS), Asp-412, and Arg-415. The tract at residues 286-416 (LLKNLPEDKL…TLNRDDEKRH (131 aa)) is cGMP-binding, high affinity; cAMP-binding, low affinity. A Phosphoserine modification is found at Ser-431. One can recognise a Protein kinase domain in the interval 453–711 (LEIIATLGVG…INDIKKHRWL (259 aa)). ATP is bound by residues 459-467 (LGVGGFGRV) and Lys-482. Asp-576 (proton acceptor) is an active-site residue. Phosphothreonine is present on Thr-609. The region spanning 712–762 (NGFNWEGLKARSLPSPLRRELSGPIDHSYFDKYPPEKGVPPDEMSGWDKDF) is the AGC-kinase C-terminal domain. Residues 740-762 (YFDKYPPEKGVPPDEMSGWDKDF) are disordered.

Belongs to the protein kinase superfamily. AGC Ser/Thr protein kinase family. cGMP subfamily. In terms of assembly, interacts with GRIA1/GLUR1. In terms of processing, myristoylation mediates membrane localization.

It is found in the apical cell membrane. It localises to the cell membrane. The catalysed reaction is L-seryl-[protein] + ATP = O-phospho-L-seryl-[protein] + ADP + H(+). The enzyme catalyses L-threonyl-[protein] + ATP = O-phospho-L-threonyl-[protein] + ADP + H(+). Its activity is regulated as follows. Binding of cGMP results in enzyme activation. Functionally, crucial regulator of intestinal secretion and bone growth. Phosphorylates and activates CFTR on the plasma membrane. Plays a key role in intestinal secretion by regulating cGMP-dependent translocation of CFTR in jejunum. Acts downstream of NMDAR to activate the plasma membrane accumulation of GRIA1/GLUR1 in synapse and increase synaptic plasticity. Phosphorylates GRIA1/GLUR1 at Ser-863. Acts as a regulator of gene expression and activator of the extracellular signal-regulated kinases MAPK3/ERK1 and MAPK1/ERK2 in mechanically stimulated osteoblasts. Under fluid shear stress, mediates ERK activation and subsequent induction of FOS, FOSL1/FRA1, FOSL2/FRA2 and FOSB that play a key role in the osteoblast anabolic response to mechanical stimulation. The protein is cGMP-dependent protein kinase 2 (Prkg2) of Mus musculus (Mouse).